Here is a 220-residue protein sequence, read N- to C-terminus: MRETPSPQTLRAFLNGHGIAVSPQQAEMLFEHVRLMLEWNLRSNLTRITEFDRILTAHLLDSLLPARWLPLTGKTLDVGTGAGFPGVPLKILHPETQMYLLESNRKKVSFLKVLLAGLSLPGIHVLHGRWEEPEGWFTEEDERFTAVIMRAVRVEPGHLTRLAPRVLRPGGVFASWAGSGTETALENRRTHAYPAPAETRSYELPGMSAPRRLYLWRMEG.

Residues Gly79, Phe84, and Arg150 each contribute to the S-adenosyl-L-methionine site.

It belongs to the methyltransferase superfamily. RNA methyltransferase RsmG family.

It localises to the cytoplasm. It carries out the reaction guanosine(527) in 16S rRNA + S-adenosyl-L-methionine = N(7)-methylguanosine(527) in 16S rRNA + S-adenosyl-L-homocysteine. Specifically methylates the N7 position of guanine in position 527 of 16S rRNA. The chain is Ribosomal RNA small subunit methyltransferase G 1 from Syntrophobacter fumaroxidans (strain DSM 10017 / MPOB).